Consider the following 158-residue polypeptide: Small ribosomal subunit protein uS15 (158 aa).

Residues 1 to 18 (MARMHARKRGKSGSKRPP) are compositionally biased toward basic residues. Positions 1-21 (MARMHARKRGKSGSKRPPRTA) are disordered.

It belongs to the universal ribosomal protein uS15 family. In terms of assembly, part of the 30S ribosomal subunit.

The chain is Small ribosomal subunit protein uS15 from Pyrococcus horikoshii (strain ATCC 700860 / DSM 12428 / JCM 9974 / NBRC 100139 / OT-3).